A 137-amino-acid chain; its full sequence is Histone H2B (137 aa).

Residues 1–10 show a composition bias toward basic and acidic residues; sequence MAPKAADKKP. Positions 1 to 45 are disordered; the sequence is MAPKAADKKPASKAPATASKAPEKKDAGKKTAPSGDKKKRTKARK. N6-acetyllysine; alternate is present on residues Lys-8 and Lys-9. Residues Lys-8 and Lys-9 each participate in a glycyl lysine isopeptide (Lys-Gly) (interchain with G-Cter in SUMO); alternate cross-link. The residue at position 12 (Ser-12) is a Phosphoserine. Lys-13 is modified (N6-acetyllysine). Residue Lys-24 is modified to N6-acetyllysine; alternate. Lys-24 is covalently cross-linked (Glycyl lysine isopeptide (Lys-Gly) (interchain with G-Cter in SUMO); alternate). A Glycyl lysine isopeptide (Lys-Gly) (interchain with G-Cter in SUMO) cross-link involves residue Lys-25. A Glycyl lysine isopeptide (Lys-Gly) (interchain with G-Cter in ubiquitin) cross-link involves residue Lys-131.

The protein belongs to the histone H2B family. As to quaternary structure, the nucleosome is a histone octamer containing two molecules each of H2A, H2B, H3 and H4 assembled in one H3-H4 heterotetramer and two H2A-H2B heterodimers. The octamer wraps approximately 147 bp of DNA. In terms of processing, monoubiquitinated by the UBC2-BRE1 complex to form H2BK123ub1. H2BK123ub1 gives a specific tag for epigenetic transcriptional activation and is also prerequisite for H3K4me and H3K79me formation. H2BK123ub1 also modulates the formation of double-strand breaks during meiosis and is a prerequisite for DNA-damage checkpoint activation. Phosphorylated to form H2BS10ph during progression through meiotic prophase. May be correlated with chromosome condensation. Post-translationally, acetylated by GCN5 to form H2BK11ac and H2BK16ac. H2BK16ac can also be formed by ESA1. Acetylation of N-terminal lysines and particularly formation of H2BK11acK16ac has a positive effect on transcription. In terms of processing, sumoylation to form H2BK6su or H2BK7su, and probably also H2BK16su or H2BK17su, occurs preferentially near the telomeres and represses gene transcription.

The protein resides in the nucleus. The protein localises to the chromosome. Core component of nucleosome. Nucleosomes wrap and compact DNA into chromatin, limiting DNA accessibility to the cellular machineries which require DNA as a template. Histones thereby play a central role in transcription regulation, DNA repair, DNA replication and chromosomal stability. DNA accessibility is regulated via a complex set of post-translational modifications of histones, also called histone code, and nucleosome remodeling. This chain is Histone H2B (HTB1), found in Chaetomium globosum (strain ATCC 6205 / CBS 148.51 / DSM 1962 / NBRC 6347 / NRRL 1970) (Soil fungus).